Consider the following 326-residue polypeptide: Eukaryotic translation initiation factor 3 subunit I (326 aa).

WD repeat units follow at residues 8–47 (GHER…RLGT), 50–89 (GHQG…IIAS), 145–184 (MTES…KVVD), 188–227 (DHAA…CLKT), and 285–326 (GHFG…NIFE).

This sequence belongs to the eIF-3 subunit I family. As to quaternary structure, component of the eukaryotic translation initiation factor 3 (eIF-3) complex. The eIF-3 complex interacts with pix.

The protein resides in the cytoplasm. Its function is as follows. Component of the eukaryotic translation initiation factor 3 (eIF-3) complex, which is involved in protein synthesis of a specialized repertoire of mRNAs and, together with other initiation factors, stimulates binding of mRNA and methionyl-tRNAi to the 40S ribosome. The eIF-3 complex specifically targets and initiates translation of a subset of mRNAs involved in cell proliferation. The chain is Eukaryotic translation initiation factor 3 subunit I from Drosophila pseudoobscura pseudoobscura (Fruit fly).